A 417-amino-acid polypeptide reads, in one-letter code: Delta-aminolevulinic acid dehydratase, chloroplastic (417 aa).

The transit peptide at 1–40 (MAALLVPGGGAAPGLVWRRRRAAVQCAAASPSSPDPSWRT) directs the protein to the chloroplast. Residues 63–92 (VVSGNPPAAPAAPAKAKAPPGTPVVKPLRL) are disordered. The active-site Schiff-base intermediate with substrate is lysine 286. 5-aminolevulinate contacts are provided by arginine 296 and lysine 308. Position 324 (glutamate 324) interacts with Mg(2+). Lysine 339 functions as the Schiff-base intermediate with substrate in the catalytic mechanism. Positions 365 and 404 each coordinate 5-aminolevulinate.

It belongs to the ALAD family. Homooctamer. Requires Mg(2+) as cofactor.

The protein localises to the plastid. It localises to the chloroplast. It catalyses the reaction 2 5-aminolevulinate = porphobilinogen + 2 H2O + H(+). The protein operates within porphyrin-containing compound metabolism; protoporphyrin-IX biosynthesis; coproporphyrinogen-III from 5-aminolevulinate: step 1/4. Catalyzes an early step in the biosynthesis of tetrapyrroles. Binds two molecules of 5-aminolevulinate per subunit, each at a distinct site, and catalyzes their condensation to form porphobilinogen. The polypeptide is Delta-aminolevulinic acid dehydratase, chloroplastic (HEMB) (Selaginella martensii (Martens's spike moss)).